The chain runs to 362 residues: Glutaminase-asparaginase (362 aa).

Positions 1–25 (MKSALKTFVPGALALLLLFPVAAQA) are cleaved as a signal peptide. An Asparaginase/glutaminase domain is found at 35–362 (ANVVILATGG…KELQRMFWEY (328 aa)). Threonine 45 functions as the Acyl-ester intermediate in the catalytic mechanism. Residues serine 92 and 125–126 (TD) each bind substrate.

The protein belongs to the asparaginase 1 family. In terms of assembly, homotetramer.

Its subcellular location is the periplasm. It carries out the reaction L-glutamine + H2O = L-glutamate + NH4(+). It catalyses the reaction L-asparagine + H2O = L-aspartate + NH4(+). This is Glutaminase-asparaginase from Pseudomonas fluorescens biotype A.